Here is a 405-residue protein sequence, read N- to C-terminus: Histidine decarboxylase (405 aa).

Substrate is bound at residue H121. Position 234 is an N6-(pyridoxal phosphate)lysine (K234).

This sequence belongs to the group II decarboxylase family. In terms of assembly, homotetramer. Pyridoxal 5'-phosphate is required as a cofactor.

It catalyses the reaction L-histidine + H(+) = histamine + CO2. The protein operates within siderophore biosynthesis; pseudomonine biosynthesis. This Pseudomonas fluorescens protein is Histidine decarboxylase.